Here is a 171-residue protein sequence, read N- to C-terminus: Large ribosomal subunit protein uL15 (171 aa).

Over residues 1-10 (MKLNEISDNN) the composition is skewed to polar residues. 2 disordered regions span residues 1–44 (MKLN…RSGV) and 150–171 (LPEA…NKAK). Gly residues predominate over residues 21–35 (RGIGSGKGKTAGRGQ). A compositionally biased stretch (basic and acidic residues) spans 157-171 (EQEKKAARREANKAK).

This sequence belongs to the universal ribosomal protein uL15 family. As to quaternary structure, part of the 50S ribosomal subunit.

In terms of biological role, binds to the 23S rRNA. The polypeptide is Large ribosomal subunit protein uL15 (Novosphingobium aromaticivorans (strain ATCC 700278 / DSM 12444 / CCUG 56034 / CIP 105152 / NBRC 16084 / F199)).